Consider the following 466-residue polypeptide: Carboxy-terminal processing protease CtpA (466 aa).

The signal sequence occupies residues 1–36 (MKRQLKLFFIVLITAVVASALTLFITGNSSILGQKS). The PDZ domain occupies 96 to 174 (DETISASFEG…TKVKLELNRA (79 aa)). Catalysis depends on charge relay system residues serine 297, glutamate 308, and lysine 322.

Belongs to the peptidase S41A family.

It carries out the reaction The enzyme shows specific recognition of a C-terminal tripeptide, Xaa-Yaa-Zaa, in which Xaa is preferably Ala or Leu, Yaa is preferably Ala or Tyr, and Zaa is preferably Ala, but then cleaves at a variable distance from the C-terminus. A typical cleavage is -Ala-Ala-|-Arg-Ala-Ala-Lys-Glu-Asn-Tyr-Ala-Leu-Ala-Ala.. This is Carboxy-terminal processing protease CtpA (ctpA) from Bacillus subtilis (strain 168).